We begin with the raw amino-acid sequence, 684 residues long: DNA helicase IV (684 aa).

One can recognise a UvrD-like helicase ATP-binding domain in the interval 195–505 (SPLNPAQARA…CDLDTTYRFN (311 aa)). ATP is bound by residues 216–223 (AGAGSGKT) and Arg-503.

This sequence belongs to the helicase family. UvrD subfamily.

It carries out the reaction Couples ATP hydrolysis with the unwinding of duplex DNA by translocating in the 3'-5' direction.. The catalysed reaction is ATP + H2O = ADP + phosphate + H(+). Its function is as follows. Helicase IV catalyzes the unwinding of duplex DNA in the 3' to 5' direction with respect to the bound single strand in a reaction that is dependent upon the hydrolysis of ATP. The sequence is that of DNA helicase IV (helD) from Escherichia coli (strain K12).